Here is a 369-residue protein sequence, read N- to C-terminus: tRNA 2-selenouridine synthase (369 aa).

Positions 15–138 constitute a Rhodanese domain; that stretch reads FLNQHPMMDV…MRQYLIGVIE (124 aa). Cys98 acts as the S-selanylcysteine intermediate in catalysis.

It belongs to the SelU family. In terms of assembly, monomer.

It catalyses the reaction 5-methylaminomethyl-2-thiouridine(34) in tRNA + selenophosphate + (2E)-geranyl diphosphate + H2O + H(+) = 5-methylaminomethyl-2-selenouridine(34) in tRNA + (2E)-thiogeraniol + phosphate + diphosphate. It carries out the reaction 5-methylaminomethyl-2-thiouridine(34) in tRNA + (2E)-geranyl diphosphate = 5-methylaminomethyl-S-(2E)-geranyl-thiouridine(34) in tRNA + diphosphate. The catalysed reaction is 5-methylaminomethyl-S-(2E)-geranyl-thiouridine(34) in tRNA + selenophosphate + H(+) = 5-methylaminomethyl-2-(Se-phospho)selenouridine(34) in tRNA + (2E)-thiogeraniol. The enzyme catalyses 5-methylaminomethyl-2-(Se-phospho)selenouridine(34) in tRNA + H2O = 5-methylaminomethyl-2-selenouridine(34) in tRNA + phosphate. In terms of biological role, involved in the post-transcriptional modification of the uridine at the wobble position (U34) of tRNA(Lys), tRNA(Glu) and tRNA(Gln). Catalyzes the conversion of 2-thiouridine (S2U-RNA) to 2-selenouridine (Se2U-RNA). Acts in a two-step process involving geranylation of 2-thiouridine (S2U) to S-geranyl-2-thiouridine (geS2U) and subsequent selenation of the latter derivative to 2-selenouridine (Se2U) in the tRNA chain. In Shewanella sp. (strain W3-18-1), this protein is tRNA 2-selenouridine synthase.